Here is a 192-residue protein sequence, read N- to C-terminus: Segregation and condensation protein B (192 aa).

It belongs to the ScpB family. As to quaternary structure, homodimer. Homodimerization may be required to stabilize the binding of ScpA to the Smc head domains. Component of a cohesin-like complex composed of ScpA, ScpB and the Smc homodimer, in which ScpA and ScpB bind to the head domain of Smc. The presence of the three proteins is required for the association of the complex with DNA.

Its subcellular location is the cytoplasm. Functionally, participates in chromosomal partition during cell division. May act via the formation of a condensin-like complex containing Smc and ScpA that pull DNA away from mid-cell into both cell halves. The chain is Segregation and condensation protein B from Oceanobacillus iheyensis (strain DSM 14371 / CIP 107618 / JCM 11309 / KCTC 3954 / HTE831).